The primary structure comprises 142 residues: Secreted RxLR effector protein 161 (142 aa).

The signal sequence occupies residues 1–27 (MKNVPYLSAVGAIMYLMVVTRPDLAAA). The RxLR motif lies at 48–51 (RVLR).

Belongs to the RxLR effector family.

The protein resides in the secreted. It is found in the host chloroplast envelope. The protein localises to the host nucleus. Secreted effector that completely suppresses the host cell death induced by cell death-inducing proteins. The chain is Secreted RxLR effector protein 161 from Plasmopara viticola (Downy mildew of grapevine).